The sequence spans 148 residues: MFDLTLAIMLFLAALSYFSHNITVTIALLVLIVIRMTPLQQTFPWIEKQGMTVGIIILTIGVMAPIASGTIPSSTLMHSFLHWKSLTAIAIGIFVSWLGGRGVTLMSTQPTVVGGLLIGTIIGVSLFRGVPVGPLIAAGLLSLMLGKG.

Transmembrane regions (helical) follow at residues 14–34, 51–71, 80–100, and 112–132; these read ALSY…LIVI, MTVG…SGTI, FLHW…WLGG, and VVGG…GVPV.

This sequence belongs to the UPF0756 family.

Its subcellular location is the cell membrane. The sequence is that of UPF0756 membrane protein ETA_17460 from Erwinia tasmaniensis (strain DSM 17950 / CFBP 7177 / CIP 109463 / NCPPB 4357 / Et1/99).